Reading from the N-terminus, the 523-residue chain is La-related protein 1C (523 aa).

A compositionally biased stretch (low complexity) spans 1–16 (MASATSNNPASSSMSP). 2 disordered regions span residues 1-52 (MASA…VRGE) and 95-313 (AAGD…VRHP). Alanine 2 carries the post-translational modification N-acetylalanine. Positions 22–31 (NHGSPTASVA) are enriched in polar residues. 2 stretches are compositionally biased toward low complexity: residues 32–44 (QSPR…VSSP) and 146–169 (SNKS…ASSS). At serine 33 the chain carries Phosphoserine. Composition is skewed to polar residues over residues 206–270 (QRNG…NGNH) and 282–305 (HGNQ…SQRG). Residues 363–452 (HYQDPPLHMK…RDNWQNWVLR (90 aa)) form the HTH La-type RNA-binding domain. A disordered region spans residues 474-523 (GNLSVDQSSADPIGGSSSQLQPTEALSDDQQQSSSTAPVSNHNAPDGANR). Residues 477-516 (SVDQSSADPIGGSSSQLQPTEALSDDQQQSSSTAPVSNHN) show a composition bias toward polar residues.

This sequence belongs to the LARP family. As to expression, age-dependent accumulation in rosette leaves.

The protein resides in the cytoplasm. Functionally, promotes leaf senescence mediated by abscisic acid (ABA), salicylic acid (SA) and jasmonic acid (MeJA), probably though the induction of expression of senescence-associated genes (SAGs) and defense-related genes. The polypeptide is La-related protein 1C (LARP1C) (Arabidopsis thaliana (Mouse-ear cress)).